The following is a 225-amino-acid chain: Endonuclease V (225 aa).

2 residues coordinate Mg(2+): Asp43 and Asp110. Interaction with target DNA regions lie at residues 139 to 141 and 214 to 221; these read KSR and HIYTQRLK.

It belongs to the endonuclease V family. Mg(2+) serves as cofactor.

It is found in the cytoplasm. The enzyme catalyses Endonucleolytic cleavage at apurinic or apyrimidinic sites to products with a 5'-phosphate.. Its function is as follows. DNA repair enzyme involved in the repair of deaminated bases. Selectively cleaves double-stranded DNA at the second phosphodiester bond 3' to a deoxyinosine leaving behind the intact lesion on the nicked DNA. In vitro, can also cleave single-stranded substrates with inosine, double-stranded DNA with apurinic sites, or DNA sites with uracil or a mismatched base. When present in molar excess, two protein molecules can bind to the same DNA substrate and effect cleavage of both strands (in vitro). This is Endonuclease V from Thermotoga maritima (strain ATCC 43589 / DSM 3109 / JCM 10099 / NBRC 100826 / MSB8).